Reading from the N-terminus, the 125-residue chain is Small ribosomal subunit protein uS12m (125 aa).

Positions 1–26 (MPTINQLLRKKSSRQAPKLKSKKPAL) are disordered. The span at 8–23 (LRKKSSRQAPKLKSKK) shows a compositional bias: basic residues.

The protein belongs to the universal ribosomal protein uS12 family.

It is found in the mitochondrion. This is Small ribosomal subunit protein uS12m (RPS12) from Prototheca wickerhamii.